A 347-amino-acid polypeptide reads, in one-letter code: Protein-glutamate methylesterase/protein-glutamine glutaminase 2 (347 aa).

A Response regulatory domain is found at 2-119 (RVMIVDDSAV…LGGADLYRKD (118 aa)). Residue aspartate 52 is modified to 4-aspartylphosphate. The segment at 131-153 (AARPAPPQAAPRPTLAPPSSDPA) is disordered. Residues 134–150 (PAPPQAAPRPTLAPPSS) are compositionally biased toward pro residues. Positions 152–346 (PAGPIEAVVV…PYIASRARSV (195 aa)) constitute a CheB-type methylesterase domain. Active-site residues include serine 164, histidine 191, and aspartate 288.

It belongs to the CheB family. In terms of processing, phosphorylated by CheA. Phosphorylation of the N-terminal regulatory domain activates the methylesterase activity.

The protein resides in the cytoplasm. It catalyses the reaction [protein]-L-glutamate 5-O-methyl ester + H2O = L-glutamyl-[protein] + methanol + H(+). The enzyme catalyses L-glutaminyl-[protein] + H2O = L-glutamyl-[protein] + NH4(+). In terms of biological role, involved in chemotaxis. Part of a chemotaxis signal transduction system that modulates chemotaxis in response to various stimuli. Catalyzes the demethylation of specific methylglutamate residues introduced into the chemoreceptors (methyl-accepting chemotaxis proteins or MCP) by CheR. Also mediates the irreversible deamidation of specific glutamine residues to glutamic acid. The chain is Protein-glutamate methylesterase/protein-glutamine glutaminase 2 from Caulobacter vibrioides (strain ATCC 19089 / CIP 103742 / CB 15) (Caulobacter crescentus).